Reading from the N-terminus, the 311-residue chain is Aspartate carbamoyltransferase catalytic subunit (311 aa).

Carbamoyl phosphate is bound by residues Arg58 and Thr59. Lys86 is an L-aspartate binding site. Carbamoyl phosphate-binding residues include Arg108, His136, and Gln139. The L-aspartate site is built by Arg169 and Arg223. Carbamoyl phosphate is bound by residues Gly264 and Pro265.

The protein belongs to the aspartate/ornithine carbamoyltransferase superfamily. ATCase family. As to quaternary structure, heterododecamer (2C3:3R2) of six catalytic PyrB chains organized as two trimers (C3), and six regulatory PyrI chains organized as three dimers (R2).

It catalyses the reaction carbamoyl phosphate + L-aspartate = N-carbamoyl-L-aspartate + phosphate + H(+). The protein operates within pyrimidine metabolism; UMP biosynthesis via de novo pathway; (S)-dihydroorotate from bicarbonate: step 2/3. In terms of biological role, catalyzes the condensation of carbamoyl phosphate and aspartate to form carbamoyl aspartate and inorganic phosphate, the committed step in the de novo pyrimidine nucleotide biosynthesis pathway. This chain is Aspartate carbamoyltransferase catalytic subunit, found in Ruegeria pomeroyi (strain ATCC 700808 / DSM 15171 / DSS-3) (Silicibacter pomeroyi).